Here is a 730-residue protein sequence, read N- to C-terminus: ATP-dependent DNA helicase Hel308 (730 aa).

Residues Gln28 and 46–53 contribute to the ATP site; that span reads IPTASGKT. Residues 33–199 form the Helicase ATP-binding domain; that stretch reads EKGLLEGKNL…WLDAELVLSE (167 aa). Residues 144-147 carry the DEAH box motif; it reads DEVH. A Helicase C-terminal domain is found at 232-433; it reads AVNLVLDTIK…ALRTHILSTI (202 aa).

The protein belongs to the helicase family. Hel308 subfamily. As to quaternary structure, monomer.

The catalysed reaction is Couples ATP hydrolysis with the unwinding of duplex DNA by translocating in the 3'-5' direction.. The enzyme catalyses ATP + H2O = ADP + phosphate + H(+). Its function is as follows. DNA-dependent ATPase and 3'-5' DNA helicase that may be involved in repair of stalled replication forks. This Methanosarcina mazei (strain ATCC BAA-159 / DSM 3647 / Goe1 / Go1 / JCM 11833 / OCM 88) (Methanosarcina frisia) protein is ATP-dependent DNA helicase Hel308.